The following is a 481-amino-acid chain: Cysteine--tRNA ligase (481 aa).

Cys29 serves as a coordination point for Zn(2+). The 'HIGH' region signature appears at 31 to 41; that stretch reads PTVYDYSHLGH. The Zn(2+) site is built by Cys210, His235, and Glu239. Positions 272-276 match the 'KMSKS' region motif; sequence KMSKS. Residue Lys275 coordinates ATP.

This sequence belongs to the class-I aminoacyl-tRNA synthetase family. As to quaternary structure, monomer. The cofactor is Zn(2+).

It localises to the cytoplasm. It carries out the reaction tRNA(Cys) + L-cysteine + ATP = L-cysteinyl-tRNA(Cys) + AMP + diphosphate. The sequence is that of Cysteine--tRNA ligase from Anaeromyxobacter dehalogenans (strain 2CP-C).